Reading from the N-terminus, the 237-residue chain is MTGYKRVLLKLSGEMFGGGKVGVDPDVVQTVAREIAAVVNAGVQIAIVTGGGNFFRGAELQQRGMDRVRADYMGMLGIVMNCLALQDFLEKLGVETRVQTAITMGQVAEPYIPRRAIRHMEKGRVVIFGAGMGMPFFSTDTVAVQRALESRCDVVLVAKNGVDGVYTADPHKDPTATKFDDLTYDEAIARGLRIMDQTAFALCGENKLPMVVFGMEPEGNILRVVQGERIGTLVTAG.

K10–G13 provides a ligand contact to ATP. UMP is bound at residue G51. Residues G52 and R56 each contribute to the ATP site. UMP contacts are provided by residues D71 and M132–T139. ATP-binding residues include N160, Y166, and D169.

Belongs to the UMP kinase family. Homohexamer.

It localises to the cytoplasm. The catalysed reaction is UMP + ATP = UDP + ADP. It functions in the pathway pyrimidine metabolism; CTP biosynthesis via de novo pathway; UDP from UMP (UMPK route): step 1/1. With respect to regulation, inhibited by UTP. Its function is as follows. Catalyzes the reversible phosphorylation of UMP to UDP. In Nocardioides sp. (strain ATCC BAA-499 / JS614), this protein is Uridylate kinase.